A 195-amino-acid chain; its full sequence is HTH-type transcriptional regulator BetI (195 aa).

The HTH tetR-type domain maps to Glu8–Leu68. A DNA-binding region (H-T-H motif) is located at residues Thr31–Phe50.

The protein operates within amine and polyamine biosynthesis; betaine biosynthesis via choline pathway [regulation]. Repressor involved in the biosynthesis of the osmoprotectant glycine betaine. It represses transcription of the choline transporter BetT and the genes of BetAB involved in the synthesis of glycine betaine. The polypeptide is HTH-type transcriptional regulator BetI (Burkholderia mallei (strain NCTC 10247)).